A 138-amino-acid chain; its full sequence is Transcription antitermination protein NusB (138 aa).

This sequence belongs to the NusB family.

Its function is as follows. Involved in transcription antitermination. Required for transcription of ribosomal RNA (rRNA) genes. Binds specifically to the boxA antiterminator sequence of the ribosomal RNA (rrn) operons. The chain is Transcription antitermination protein NusB from Helicobacter pylori (strain J99 / ATCC 700824) (Campylobacter pylori J99).